The chain runs to 368 residues: DNA replication and repair protein RecF (368 aa).

Residue 30–37 participates in ATP binding; it reads GKNGTGKT.

It belongs to the RecF family.

Its subcellular location is the cytoplasm. The RecF protein is involved in DNA metabolism; it is required for DNA replication and normal SOS inducibility. RecF binds preferentially to single-stranded, linear DNA. It also seems to bind ATP. This Chloroherpeton thalassium (strain ATCC 35110 / GB-78) protein is DNA replication and repair protein RecF.